A 555-amino-acid polypeptide reads, in one-letter code: Urocanate hydratase (555 aa).

Residues 51–52 (GG), Gln129, 175–177 (GMG), Glu195, 262–266 (QTSAH), 272–273 (YL), and Tyr321 each bind NAD(+). Cys409 is a catalytic residue. Residue Gly491 coordinates NAD(+).

It belongs to the urocanase family. It depends on NAD(+) as a cofactor.

The protein localises to the cytoplasm. The catalysed reaction is 4-imidazolone-5-propanoate = trans-urocanate + H2O. The protein operates within amino-acid degradation; L-histidine degradation into L-glutamate; N-formimidoyl-L-glutamate from L-histidine: step 2/3. Functionally, catalyzes the conversion of urocanate to 4-imidazolone-5-propionate. The polypeptide is Urocanate hydratase (Xanthomonas euvesicatoria pv. vesicatoria (strain 85-10) (Xanthomonas campestris pv. vesicatoria)).